A 220-amino-acid chain; its full sequence is ATP synthase subunit 5, mitochondrial (220 aa).

It belongs to the ATPase delta chain family. F-type ATPases have 2 components, CF(1) - the catalytic core - and CF(0) - the membrane proton channel. CF(1) has five subunits: alpha(3), beta(3), gamma(1), delta(1), epsilon(1). CF(0) has three main subunits: a, b and c.

The protein localises to the mitochondrion. Its subcellular location is the mitochondrion inner membrane. Functionally, mitochondrial membrane ATP synthase (F(1)F(0) ATP synthase or Complex V) produces ATP from ADP in the presence of a proton gradient across the membrane which is generated by electron transport complexes of the respiratory chain. F-type ATPases consist of two structural domains, F(1) - containing the extramembraneous catalytic core and F(0) - containing the membrane proton channel, linked together by a central stalk and a peripheral stalk. During catalysis, ATP synthesis in the catalytic domain of F(1) is coupled via a rotary mechanism of the central stalk subunits to proton translocation. Part of the complex F(0) domain and the peripheric stalk, which acts as a stator to hold the catalytic alpha(3)beta(3) subcomplex and subunit a/ATP6 static relative to the rotary elements. In Neurospora crassa (strain ATCC 24698 / 74-OR23-1A / CBS 708.71 / DSM 1257 / FGSC 987), this protein is ATP synthase subunit 5, mitochondrial (atp-5).